Consider the following 352-residue polypeptide: Chorismate synthase (352 aa).

An NADP(+)-binding site is contributed by arginine 48. FMN is bound by residues 125–127 (RSS), 237–238 (NA), glycine 278, 293–297 (KPTSS), and arginine 319.

Belongs to the chorismate synthase family. Homotetramer. It depends on FMNH2 as a cofactor.

It carries out the reaction 5-O-(1-carboxyvinyl)-3-phosphoshikimate = chorismate + phosphate. It functions in the pathway metabolic intermediate biosynthesis; chorismate biosynthesis; chorismate from D-erythrose 4-phosphate and phosphoenolpyruvate: step 7/7. Its function is as follows. Catalyzes the anti-1,4-elimination of the C-3 phosphate and the C-6 proR hydrogen from 5-enolpyruvylshikimate-3-phosphate (EPSP) to yield chorismate, which is the branch point compound that serves as the starting substrate for the three terminal pathways of aromatic amino acid biosynthesis. This reaction introduces a second double bond into the aromatic ring system. The protein is Chorismate synthase of Francisella tularensis subsp. tularensis (strain FSC 198).